Here is a 58-residue protein sequence, read N- to C-terminus: DNA-directed RNA polymerases I, II, and III subunit RPABC4 (58 aa).

The Zn(2+) site is built by Cys-19, Cys-22, Cys-36, and Cys-39. The C4-type zinc finger occupies Cys-19–Cys-39.

This sequence belongs to the archaeal Rpo12/eukaryotic RPC10 RNA polymerase subunit family. As to quaternary structure, component of the RNA polymerase I (Pol I), RNA polymerase II (Pol II) and RNA polymerase III (Pol III) complexes consisting of at least 13, 12 and 17 subunits, respectively. Pol I complex consists of a ten-subunit catalytic core composed of POLR1A/RPA1, POLR1B/RPA2, POLR1C/RPAC1, POLR1D/RPAC2, POLR1H/RPA12, POLR2E/RPABC1, POLR2F/RPABC2, POLR2H/RPABC3, POLR2K/RPABC4 and POLR2L/RPABC5; a mobile stalk subunit POLR1F/RPA43 protruding from the core and additional subunits homologous to general transcription factors POLR1E/RPA49 and POLR1G/RPA34. Part of Pol I pre-initiation complex (PIC), in which Pol I core assembles with RRN3 and promoter-bound UTBF and SL1/TIF-IB complex. Pol II complex contains a ten-subunit catalytic core composed of POLR2A/RPB1, POLR2B/RPB2, POLR2C/RPB3, POLR2I/RPB9, POLR2J/RPB11, POLR2E/RPABC1, POLR2F/RPABC2, POLR2H/RPABC3, POLR2K/RPABC4 and POLR2L/RPABC5 and a mobile stalk composed of two subunits POLR2D/RPB4 and POLR2G/RPB7. Part of Pol II(G) complex, in which Pol II core associates with an additional subunit POLR2M; unlike conventional Pol II, Pol II(G) functions as a transcriptional repressor. Part of TBP-based Pol II pre-initiation complex (PIC), in which Pol II core assembles with general transcription factors and other specific initiation factors including GTF2E1, GTF2E2, GTF2F1, GTF2F2, TCEA1, ERCC2, ERCC3, GTF2H2, GTF2H3, GTF2H4, GTF2H5, GTF2A1, GTF2A2, GTF2B and TBP; this large multi-subunit PIC complex mediates DNA unwinding and targets Pol II core to the transcription start site where the first phosphodiester bond forms. Pol III complex consists of a ten-subunit catalytic core composed of POLR3A/RPC1, POLR3B/RPC2, POLR1C/RPAC1, POLR1D/RPAC2, POLR3K/RPC10, POLR2E/RPABC1, POLR2F/RPABC2, POLR2H/RPABC3, POLR2K/RPABC4 and POLR2L/RPABC5; a mobile stalk composed of two subunits POLR3H/RPC8 and CRCP/RPC9, protruding from the core and functioning primarily in transcription initiation; and additional subunits homologous to general transcription factors of the RNA polymerase II machinery, POLR3C/RPC3-POLR3F/RPC6-POLR3G/RPC7 heterotrimer required for transcription initiation and POLR3D/RPC4-POLR3E/RPC5 heterodimer involved in both transcription initiation and termination.

Its subcellular location is the nucleus. The protein localises to the nucleolus. Functionally, DNA-dependent RNA polymerase catalyzes the transcription of DNA into RNA using the four ribonucleoside triphosphates as substrates. Common component of RNA polymerases I, II and III which synthesize ribosomal RNA precursors, mRNA precursors and many functional non-coding RNAs, and a small RNAs, such as 5S rRNA and tRNAs, respectively. This Mus musculus (Mouse) protein is DNA-directed RNA polymerases I, II, and III subunit RPABC4 (Polr2k).